We begin with the raw amino-acid sequence, 142 residues long: Hemoglobin subunit beta-C (142 aa).

A Globin domain is found at 1-142 (MPNKALITGF…VASALAHRYH (142 aa)). Positions 59 and 88 each coordinate heme b.

It belongs to the globin family. In terms of assembly, heterotetramer of two alpha chains and two beta chains. Red blood cells.

Functionally, involved in oxygen transport from the lung to the various peripheral tissues. This Capra hircus (Goat) protein is Hemoglobin subunit beta-C (HBBC).